A 241-amino-acid chain; its full sequence is 1-(5-phosphoribosyl)-5-[(5-phosphoribosylamino)methylideneamino] imidazole-4-carboxamide isomerase (241 aa).

Asp-8 (proton acceptor) is an active-site residue. Catalysis depends on Asp-130, which acts as the Proton donor.

Belongs to the HisA/HisF family.

Its subcellular location is the cytoplasm. It carries out the reaction 1-(5-phospho-beta-D-ribosyl)-5-[(5-phospho-beta-D-ribosylamino)methylideneamino]imidazole-4-carboxamide = 5-[(5-phospho-1-deoxy-D-ribulos-1-ylimino)methylamino]-1-(5-phospho-beta-D-ribosyl)imidazole-4-carboxamide. Its pathway is amino-acid biosynthesis; L-histidine biosynthesis; L-histidine from 5-phospho-alpha-D-ribose 1-diphosphate: step 4/9. This Francisella philomiragia subsp. philomiragia (strain ATCC 25017 / CCUG 19701 / FSC 153 / O#319-036) protein is 1-(5-phosphoribosyl)-5-[(5-phosphoribosylamino)methylideneamino] imidazole-4-carboxamide isomerase.